The sequence spans 562 residues: Abrin-c (562 aa).

A signal peptide spans M1–N34. Pyrrolidone carboxylic acid is present on Q35. Residue E198 is part of the active site. A glycan (N-linked (GlcNAc...) asparagine) is linked at N234. 3 disulfides stabilise this stretch: C281–C303, C320–C339, and C363–C380. The Ricin B-type lectin 1 domain occupies Y307–G434. Residues D317 to S359 form a 1-alpha repeat. One copy of the 1-beta repeat lies at N360 to N400. Residues N395 and N435 are each glycosylated (N-linked (GlcNAc...) asparagine). Residues S403–N435 form a 1-gamma repeat. One can recognise a Ricin B-type lectin 2 domain in the interval T437–L561. Residues S448–S483 form a 2-alpha repeat. 2 cysteine pairs are disulfide-bonded: C451–C464 and C490–C507. The 2-beta repeat unit spans residues T487–N526. The stretch at D529–F562 is one 2-gamma repeat.

The protein in the N-terminal section; belongs to the ribosome-inactivating protein family. Type 2 RIP subfamily. Disulfide-linked dimer of A and B chains.

It catalyses the reaction Endohydrolysis of the N-glycosidic bond at one specific adenosine on the 28S rRNA.. Functionally, the A chain is responsible for inhibiting protein synthesis through the catalytic inactivation of 60S ribosomal subunits by removing adenine from position 4,324 of 28S rRNA. Abrin-a is more toxic than ricin. The B chain is a galactose-specific lectin that facilitates the binding of abrin to the cell membrane that precedes endocytosis. In Abrus precatorius (Indian licorice), this protein is Abrin-c.